A 335-amino-acid polypeptide reads, in one-letter code: Putative hydrogenase expression/formation protein MJ0676 (335 aa).

It belongs to the HypE family.

The protein is Putative hydrogenase expression/formation protein MJ0676 of Methanocaldococcus jannaschii (strain ATCC 43067 / DSM 2661 / JAL-1 / JCM 10045 / NBRC 100440) (Methanococcus jannaschii).